A 398-amino-acid chain; its full sequence is Inner membrane protein YjgN (398 aa).

The Cytoplasmic portion of the chain corresponds to 1 to 24; sequence MAQVINEMDVPSHSFVFHGTGERY. Residues 25–45 traverse the membrane as a helical segment; the sequence is FLICVVNVLLTIITLGIYLPW. At 46 to 73 the chain is on the periplasmic side; that stretch reads ALMKCKRYLYANMEVNGQRFSYGITGGN. A helical transmembrane segment spans residues 74 to 94; it reads VFVSCLFFVFFYFAILMTVSA. Position 95 (Asp-95) is a topological domain, cytoplasmic. A helical membrane pass occupies residues 96–116; sequence MPLVGCVLTLLLLVLLIFMAA. The Periplasmic segment spans residues 117–142; that stretch reads KGLRHQALMTSLNGVRFSFNCSMKGF. The helical transmembrane segment at 143–163 threads the bilayer; it reads WWVTFFLPILMAIGMGTVFFI. Over 164 to 175 the chain is Cytoplasmic; it reads STKMLPANSSSS. The helical transmembrane segment at 176-196 threads the bilayer; it reads VIISMVLMAIVGIVSIGIFNG. The Periplasmic segment spans residues 197 to 228; it reads TLYSLVMSFLWSNTSFGIHRFKVKLDTTYCIK. The chain crosses the membrane as a helical span at residues 229–249; sequence YAILAFLALLPFLAVAGYIIF. Residues 250-278 lie on the Cytoplasmic side of the membrane; that stretch reads DQILNAYDSSVYANDDIENLQQFMEMQRK. A helical transmembrane segment spans residues 279–299; that stretch reads MIIAQLIYYFGIAVSTSYLTV. Residues 300–333 lie on the Periplasmic side of the membrane; that stretch reads SLRNHFMSNLSLNDGRIRFRLTLTYHGMLYRMCA. Residues 334–354 form a helical membrane-spanning segment; it reads LVVISGITGGLAYPLLKIWMI. The Cytoplasmic segment spans residues 355 to 398; it reads DWQAKNTYLLGDLDDLPLINKEEQPDKGFLASISRGVMPSLPFL.

It is found in the cell inner membrane. This chain is Inner membrane protein YjgN (yjgN), found in Escherichia coli (strain K12).